Consider the following 813-residue polypeptide: Nuclear pore complex protein 5 (813 aa).

This sequence belongs to the nucleoporin Nup84/Nup107 family. As to quaternary structure, part of the nuclear pore complex (NPC). May interact with mdf-1.

It is found in the nucleus. The protein resides in the nuclear pore complex. The protein localises to the chromosome. It localises to the centromere. Its subcellular location is the kinetochore. It is found in the nucleus membrane. In terms of biological role, involved in kinetochore assembly and chromosome segregation during embryonic mitosis. Required for the localization of the NDC80 complex member him-10, the chromosomal passenger complex component air-2 and nuclear pore complex proteins npp-23 and npp-15 to kinetochores during metaphase. Required for npp-23 localization to the nuclear envelope during interphase. Recruits mdf-1, a component of the spindle assembly checkpoint, to the nuclear envelope. Appears dispensable for the assembly of the nuclear pore complex and for nuclear protein import. The polypeptide is Nuclear pore complex protein 5 (Caenorhabditis elegans).